A 79-amino-acid polypeptide reads, in one-letter code: MNSINADLLYISAAIIMGFASIGAAIGIGILGGKFLEGAARQPDLIPTLRTQFFIVMGLVDAIPMISVGLGLYLIFAAS.

2 helical membrane-spanning segments follow: residues Ile-11–Leu-31 and Ile-55–Ile-75.

It belongs to the ATPase C chain family. F-type ATPases have 2 components, F(1) - the catalytic core - and F(0) - the membrane proton channel. F(1) has five subunits: alpha(3), beta(3), gamma(1), delta(1), epsilon(1). F(0) has three main subunits: a(1), b(2) and c(10-14). The alpha and beta chains form an alternating ring which encloses part of the gamma chain. F(1) is attached to F(0) by a central stalk formed by the gamma and epsilon chains, while a peripheral stalk is formed by the delta and b chains.

It localises to the cell membrane. Functionally, f(1)F(0) ATP synthase produces ATP from ADP in the presence of a proton or sodium gradient. F-type ATPases consist of two structural domains, F(1) containing the extramembraneous catalytic core and F(0) containing the membrane proton channel, linked together by a central stalk and a peripheral stalk. During catalysis, ATP synthesis in the catalytic domain of F(1) is coupled via a rotary mechanism of the central stalk subunits to proton translocation. In terms of biological role, key component of the F(0) channel; it plays a direct role in translocation across the membrane. A homomeric c-ring of between 10-14 subunits forms the central stalk rotor element with the F(1) delta and epsilon subunits. The protein is ATP synthase subunit c of Wigglesworthia glossinidia brevipalpis.